We begin with the raw amino-acid sequence, 596 residues long: V-type ATP synthase alpha chain (596 aa).

233 to 240 (GPFGAGKT) serves as a coordination point for ATP.

This sequence belongs to the ATPase alpha/beta chains family.

The enzyme catalyses ATP + H2O + 4 H(+)(in) = ADP + phosphate + 5 H(+)(out). Produces ATP from ADP in the presence of a proton gradient across the membrane. The V-type alpha chain is a catalytic subunit. This chain is V-type ATP synthase alpha chain, found in Streptococcus sanguinis (strain SK36).